Consider the following 369-residue polypeptide: tRNA/tmRNA (uracil-C(5))-methyltransferase (369 aa).

S-adenosyl-L-methionine-binding residues include glutamine 190, tyrosine 218, asparagine 223, glutamate 239, and aspartate 301. The Nucleophile role is filled by cysteine 326. Glutamate 360 functions as the Proton acceptor in the catalytic mechanism.

The protein belongs to the class I-like SAM-binding methyltransferase superfamily. RNA M5U methyltransferase family. TrmA subfamily.

It carries out the reaction uridine(54) in tRNA + S-adenosyl-L-methionine = 5-methyluridine(54) in tRNA + S-adenosyl-L-homocysteine + H(+). The enzyme catalyses uridine(341) in tmRNA + S-adenosyl-L-methionine = 5-methyluridine(341) in tmRNA + S-adenosyl-L-homocysteine + H(+). Its function is as follows. Dual-specificity methyltransferase that catalyzes the formation of 5-methyluridine at position 54 (m5U54) in all tRNAs, and that of position 341 (m5U341) in tmRNA (transfer-mRNA). The protein is tRNA/tmRNA (uracil-C(5))-methyltransferase of Vibrio vulnificus (strain YJ016).